The primary structure comprises 351 residues: UDP-3-O-acylglucosamine N-acyltransferase (351 aa).

The active-site Proton acceptor is histidine 257.

This sequence belongs to the transferase hexapeptide repeat family. LpxD subfamily. In terms of assembly, homotrimer.

The catalysed reaction is a UDP-3-O-[(3R)-3-hydroxyacyl]-alpha-D-glucosamine + a (3R)-hydroxyacyl-[ACP] = a UDP-2-N,3-O-bis[(3R)-3-hydroxyacyl]-alpha-D-glucosamine + holo-[ACP] + H(+). It functions in the pathway bacterial outer membrane biogenesis; LPS lipid A biosynthesis. In terms of biological role, catalyzes the N-acylation of UDP-3-O-acylglucosamine using 3-hydroxyacyl-ACP as the acyl donor. Is involved in the biosynthesis of lipid A, a phosphorylated glycolipid that anchors the lipopolysaccharide to the outer membrane of the cell. This is UDP-3-O-acylglucosamine N-acyltransferase from Methylorubrum extorquens (strain CM4 / NCIMB 13688) (Methylobacterium extorquens).